We begin with the raw amino-acid sequence, 231 residues long: Claudin-10 (231 aa).

The helical transmembrane segment at 1–21 (MASTALEIVAFVVSISGWVLV) threads the bilayer. Residues 22–80 (SSTLPTDYWKVSTIDGTVITTATYFANLWKICVTDSTGVANCKEFPSMLALDGYIQACR) lie on the Extracellular side of the membrane. A helical membrane pass occupies residues 81–101 (GLMIAAVSLGFFGSIFALFGM). Over 102–115 (KCTKVGGSDQAKAK) the chain is Cytoplasmic. The helical transmembrane segment at 116-136 (IACLAGIVFILSGLCSMTGCS) threads the bilayer. Residues 137 to 160 (LYANKITTEFFDPLYMEQKYELGA) lie on the Extracellular side of the membrane. A helical transmembrane segment spans residues 161–181 (ALFIGWAGASLCIIGGVIFCF). Topologically, residues 182 to 231 (SISDNNKTPRMGYTYNGPTSAMSSRTKYQGGEGDFKTTGPSKQFDKNAYV) are cytoplasmic.

It belongs to the claudin family. Can form homodimers both in trans (interaction between CLDN10 molecules in opposing membranes) and in cis (interaction between CLDN10 molecules within one membrane). Interacts with CLDN19. As to expression, widely expressed, with highest expression detected in brain cortex, kidney and lung. In kidney, the expression is highest in medulla, with transcripts being detected in medullary thick ascending limb of Henle's loop (mTAL) and outer and inner medullary collecting ducts. Expressed in salivary glands and skin. In terms of tissue distribution, detected in kidney with transcripts being detected in PCT, mTAL and cortical collecting duct. Detected in uterus. Expressed in proximal tubules (at protein level). Only detected in kidney and uterus. As to expression, detected in kidney with transcripts being detected in PCT, mTAL and cortical collecting duct. Detected in uterus. In terms of tissue distribution, expressed in the inner ear where it is detected in organ of Corti, marginal cells of stria vascularis, Reissner's membrane and spiral limbus (at protein level).

It localises to the cell junction. Its subcellular location is the tight junction. The protein resides in the cell membrane. It is found in the endoplasmic reticulum. The enzyme catalyses Na(+)(in) = Na(+)(out). The catalysed reaction is Li(+)(in) = Li(+)(out). It catalyses the reaction K(+)(in) = K(+)(out). It carries out the reaction Rb(+)(in) = Rb(+)(out). The enzyme catalyses Cs(+)(in) = Cs(+)(out). The catalysed reaction is NH4(+)(in) = NH4(+)(out). It catalyses the reaction methylamine(out) = methylamine(in). It carries out the reaction Mg(2+)(in) = Mg(2+)(out). The enzyme catalyses Ca(2+)(in) = Ca(2+)(out). The catalysed reaction is Sr(2+)(in) = Sr(2+)(out). It catalyses the reaction chloride(in) = chloride(out). It carries out the reaction nitrate(in) = nitrate(out). Forms paracellular channels: polymerizes in tight junction strands with cation- and anion-selective channels through the strands, conveying epithelial permeability in a process known as paracellular tight junction permeability. Its function is as follows. Forms cation-selective paracellular channels. In sweat glands and in the thick ascending limb (TAL) of Henle's loop in kidney, it controls paracellular sodium permeability which is essential for proper sweat production and renal function. In terms of biological role, forms anion-selective paracellular channels. In renal proximal tubules, it conveys selective chloride over hydrogencarbonate anion permeability which is required for renal chloride reabsorption and salt homeostasis. This is Claudin-10 from Mus musculus (Mouse).